Reading from the N-terminus, the 210-residue chain is Ras-related protein SEC4 (210 aa).

GTP is bound at residue 21–28; the sequence is GDSGVGKS. Residues 43–51 carry the Effector region motif; that stretch reads FITTIGIDF. Residues 69 to 73 and 127 to 130 each bind GTP; these read DTAGQ and NKCD. S-geranylgeranyl cysteine attachment occurs at residues C209 and C210.

Belongs to the small GTPase superfamily. Rab family.

It is found in the cytoplasmic vesicle. The protein resides in the secretory vesicle membrane. It localises to the cell membrane. Its function is as follows. Involved in exocytosis. Maybe by regulating the binding and fusion of secretory vesicles with the cell surface. The GTP-bound form of SEC4 may interact with an effector, thereby stimulating its activity and leading to exocytotic fusion. SEC4 may be an upstream activator of the 19.5S SEC8/SEC15 particle. SEC4 probably interacts directly with SEC8; it could serve as the attachment site for the SEC8/SEC15 particle. The chain is Ras-related protein SEC4 (SEC4) from Candida albicans (strain SC5314 / ATCC MYA-2876) (Yeast).